Consider the following 83-residue polypeptide: U20-theraphotoxin-Cg1a 2 (83 aa).

Residues 1–21 (MQVSVLITLAVLGVMFVWTSA) form the signal peptide. A propeptide spanning residues 22–47 (AELEERGSDQPAWLKSLERIFQSEER) is cleaved from the precursor. 3 disulfide bridges follow: cysteine 49–cysteine 63, cysteine 56–cysteine 68, and cysteine 62–cysteine 76.

Belongs to the neurotoxin 10 (Hwtx-1) family. 40 (Jztx-35) subfamily. Expressed by the venom gland.

It is found in the secreted. In terms of biological role, probable ion channel inhibitor. The chain is U20-theraphotoxin-Cg1a 2 from Chilobrachys guangxiensis (Chinese earth tiger tarantula).